Consider the following 107-residue polypeptide: UPF0145 protein Memar_1285 (107 aa).

It belongs to the UPF0145 family.

This is UPF0145 protein Memar_1285 from Methanoculleus marisnigri (strain ATCC 35101 / DSM 1498 / JR1).